Reading from the N-terminus, the 84-residue chain is Small ribosomal subunit protein uS17 (84 aa).

This sequence belongs to the universal ribosomal protein uS17 family. In terms of assembly, part of the 30S ribosomal subunit.

Its function is as follows. One of the primary rRNA binding proteins, it binds specifically to the 5'-end of 16S ribosomal RNA. The chain is Small ribosomal subunit protein uS17 from Vibrio atlanticus (strain LGP32) (Vibrio splendidus (strain Mel32)).